The chain runs to 128 residues: Large ribosomal subunit protein bL20c (128 aa).

Belongs to the bacterial ribosomal protein bL20 family.

The protein localises to the plastid. Its subcellular location is the chloroplast. Its function is as follows. Binds directly to 23S ribosomal RNA and is necessary for the in vitro assembly process of the 50S ribosomal subunit. It is not involved in the protein synthesizing functions of that subunit. This chain is Large ribosomal subunit protein bL20c, found in Gossypium barbadense (Sea Island cotton).